Consider the following 199-residue polypeptide: Recombination protein RecR (199 aa).

Residues 57–72 (CPICGNITEKEICDIC) form a C4-type zinc finger. The region spanning 80-176 (TTIMVVEQPK…KVTRLAAGLS (97 aa)) is the Toprim domain.

The protein belongs to the RecR family.

May play a role in DNA repair. It seems to be involved in an RecBC-independent recombinational process of DNA repair. It may act with RecF and RecO. This chain is Recombination protein RecR, found in Lactobacillus acidophilus (strain ATCC 700396 / NCK56 / N2 / NCFM).